Reading from the N-terminus, the 227-residue chain is Cytidylate kinase (227 aa).

Residue 12–20 participates in ATP binding; sequence GPSGAGKGT.

This sequence belongs to the cytidylate kinase family. Type 1 subfamily.

It is found in the cytoplasm. It catalyses the reaction CMP + ATP = CDP + ADP. The enzyme catalyses dCMP + ATP = dCDP + ADP. The chain is Cytidylate kinase from Salmonella paratyphi B (strain ATCC BAA-1250 / SPB7).